The chain runs to 572 residues: Receptor-transporting protein 5 (572 aa).

The 3CxxC-type zinc finger occupies 52–148 (SRLQCGHCPG…AYEGCCEACE (97 aa)). Residues 544-560 (FWIWVSMTVCVFWLMCM) traverse the membrane as a helical segment.

It localises to the membrane. The polypeptide is Receptor-transporting protein 5 (RTP5) (Homo sapiens (Human)).